A 58-amino-acid polypeptide reads, in one-letter code: Small ribosomal subunit protein bS21 (58 aa).

The protein belongs to the bacterial ribosomal protein bS21 family.

In Staphylococcus aureus (strain bovine RF122 / ET3-1), this protein is Small ribosomal subunit protein bS21.